The chain runs to 334 residues: NAD-dependent protein deacylase sirtuin-6 (334 aa).

Serine 2 carries the post-translational modification N-acetylserine. Residue serine 10 is modified to Phosphoserine. A Deacetylase sirtuin-type domain is found at 27 to 272 (PEELERKVWE…CRLMKHLGLE (246 aa)). Lysine 33 carries the post-translational modification N6-acetyllysine. Positions 53, 57, 64, 65, 71, 113, and 133 each coordinate NAD(+). Histidine 133 acts as the Proton acceptor in catalysis. Cysteine 141, cysteine 144, and cysteine 166 together coordinate Zn(2+). Lysine 170 is covalently cross-linked (Glycyl lysine isopeptide (Lys-Gly) (interchain with G-Cter in ubiquitin)). Cysteine 177 contributes to the Zn(2+) binding site. NAD(+) is bound by residues glycine 214, serine 216, asparagine 240, glutamine 242, and valine 258. Residues 312–334 (KSKPNSPILHRPPKRVKTEAAPS) form a disordered region.

The protein belongs to the sirtuin family. Class IV subfamily. In terms of assembly, homodimer; binds to nucleosomes and DNA ends as a homodimer. Interacts with RELA; interferes with RELA binding to target DNA. Interacts with SMARCA5; promoting recruitment of SMARCA5/SNF2H to double-strand breaks (DSBs) sites. Interacts with the mTORC2 complex; preventing the ability of SIRT6 to deacetylate FOXO1. Interacts with the CLOCK-BMAL1 complex; recruited by the CLOCK-BMAL1 complex to regulate expression of clock-controlled genes. Interacts with CSNK2A2; preventing CSNK2A2 localization to the nucleus. The cofactor is Zn(2+). Acetylated at Lys-33. Deacetylation at Lys-33 by SIRT1 promotes homomultimerization and binding to double-strand breaks (DSBs) sites. Post-translationally, phosphorylation at Ser-10 by MAPK8/JNK1 in response to oxidative stress stimulates the mono-ADP-ribosyltransferase activity on PARP1, leading to PARP1 recruitment to double-strand breaks (DSBs). In terms of processing, monoubiquitinated at Lys-170 by STUB1/CHIP, preventing its degradation by the proteasome. Sumoylated, leading to specifically decrease ability to deacetylate histone H3 at 'Lys-56' (H3K56ac). In terms of tissue distribution, highest levels are found in muscle, thymus, spleen, brain and heart (at protein level).

It localises to the nucleus. The protein resides in the chromosome. The protein localises to the telomere. It is found in the endoplasmic reticulum. It catalyses the reaction N(6)-acetyl-L-lysyl-[protein] + NAD(+) + H2O = 2''-O-acetyl-ADP-D-ribose + nicotinamide + L-lysyl-[protein]. The catalysed reaction is N(6)-tetradecanoyl-L-lysyl-[protein] + NAD(+) + H2O = 2''-O-tetradecanoyl-ADP-D-ribose + nicotinamide + L-lysyl-[protein]. It carries out the reaction N(6)-hexadecanoyl-L-lysyl-[protein] + NAD(+) + H2O = 2''-O-hexadecanoyl-ADP-D-ribose + nicotinamide + L-lysyl-[protein]. The enzyme catalyses L-lysyl-[protein] + NAD(+) = N(6)-(ADP-D-ribosyl)-L-lysyl-[protein] + nicotinamide + H(+). It catalyses the reaction L-arginyl-[protein] + NAD(+) = N(omega)-(ADP-D-ribosyl)-L-arginyl-[protein] + nicotinamide + H(+). Compared to the defatty-acylase activity, the protein deacetylase activity is weak in vitro, and requires activation. The histone deacetylase activity is strongly activated upon binding to nucleosomes and chromatin in vivo. Two molecules of SIRT6 associate with the acidic patch of one nucleosome, while the C-terminal disordered region of SIRT6 associates with nucleosomal DNA, leading to efficient histone deacetylation. The protein-lysine deacetylase activity is also activated by long-chain free fatty-acids. Functionally, NAD-dependent protein deacetylase, deacylase and mono-ADP-ribosyltransferase that plays an essential role in DNA damage repair, telomere maintenance, metabolic homeostasis, inflammation, tumorigenesis and aging. Displays protein-lysine deacetylase or defatty-acylase (demyristoylase and depalmitoylase) activity, depending on the context. Acts as a key histone deacetylase by catalyzing deacetylation of histone H3 at 'Lys-9', 'Lys-18' and 'Lys-56' (H3K9ac, H3K18ac and H3K56ac, respectively), suppressing target gene expression of several transcription factors, including NF-kappa-B. Acts as an inhibitor of transcription elongation by mediating deacetylation of H3K9ac and H3K56ac, preventing release of NELFE from chromatin and causing transcriptional pausing. Involved in DNA repair by promoting double-strand break (DSB) repair: acts as a DSB sensor by recognizing and binding DSB sites, leading to (1) recruitment of DNA repair proteins, such as SMARCA5/SNF2H, and (2) deacetylation of histone H3K9ac and H3K56ac. SIRT6 participation to DSB repair is probably involved in extension of life span. Also promotes DNA repair by deacetylating non-histone proteins, such as DDB2 and p53/TP53. Specifically deacetylates H3K18ac at pericentric heterochromatin, thereby maintaining pericentric heterochromatin silencing at centromeres and protecting against genomic instability and cellular senescence. Involved in telomere maintenance by catalyzing deacetylation of histone H3 in telomeric chromatin, regulating telomere position effect and telomere movement in response to DNA damage. Required for embryonic stem cell differentiation by mediating histone deacetylation of H3K9ac. Plays a major role in metabolism by regulating processes such as glycolysis, gluconeogenesis, insulin secretion and lipid metabolism. Inhibits glycolysis via histone deacetylase activity and by acting as a corepressor of the transcription factor HIF1A, thereby controlling the expression of multiple glycolytic genes. Has tumor suppressor activity by repressing glycolysis, thereby inhibiting the Warburg effect. Also regulates glycolysis and tumorigenesis by mediating deacetylation and nuclear export of non-histone proteins, such as isoform M2 of PKM (PKM2). Acts as a negative regulator of gluconeogenesis by mediating deacetylation of non-histone proteins, such as FOXO1 and KAT2A/GCN5. Promotes beta-oxidation of fatty acids during fasting by catalyzing deacetylation of NCOA2, inducing coactivation of PPARA. Acts as a regulator of lipid catabolism in brown adipocytes, both by catalyzing deacetylation of histones and non-histone proteins, such as FOXO1. Also acts as a regulator of circadian rhythms, both by regulating expression of clock-controlled genes involved in lipid and carbohydrate metabolism, and by catalyzing deacetylation of PER2. The defatty-acylase activity is specifically involved in regulation of protein secretion. Has high activity toward long-chain fatty acyl groups and mediates protein-lysine demyristoylation and depalmitoylation of target proteins, such as RRAS2 and TNF, thereby regulating their secretion. Also acts as a mono-ADP-ribosyltransferase by mediating mono-ADP-ribosylation of PARP1, TRIM28/KAP1 or SMARCC2/BAF170. Mono-ADP-ribosyltransferase activity is involved in DNA repair, cellular senescence, repression of LINE-1 retrotransposon elements and regulation of transcription. The chain is NAD-dependent protein deacylase sirtuin-6 from Mus musculus (Mouse).